The chain runs to 121 residues: Large ribosomal subunit protein bL20 (121 aa).

Belongs to the bacterial ribosomal protein bL20 family.

Binds directly to 23S ribosomal RNA and is necessary for the in vitro assembly process of the 50S ribosomal subunit. It is not involved in the protein synthesizing functions of that subunit. The protein is Large ribosomal subunit protein bL20 of Koribacter versatilis (strain Ellin345).